Consider the following 114-residue polypeptide: Nucleoid-associated protein MAE_23910 (114 aa).

The protein belongs to the YbaB/EbfC family. In terms of assembly, homodimer.

The protein resides in the cytoplasm. It is found in the nucleoid. In terms of biological role, binds to DNA and alters its conformation. May be involved in regulation of gene expression, nucleoid organization and DNA protection. The chain is Nucleoid-associated protein MAE_23910 from Microcystis aeruginosa (strain NIES-843 / IAM M-2473).